Reading from the N-terminus, the 315-residue chain is Putative 2-hydroxyacid dehydrogenase HI_1556 (315 aa).

Residues T73, 156 to 157, 231 to 233, and D257 each bind NAD(+); these read CL and TGR. The active site involves R233. The active site involves E262. The Proton donor role is filled by H285. Position 285–288 (285–288) interacts with NAD(+); the sequence is HIAW.

Belongs to the D-isomer specific 2-hydroxyacid dehydrogenase family.

This chain is Putative 2-hydroxyacid dehydrogenase HI_1556, found in Haemophilus influenzae (strain ATCC 51907 / DSM 11121 / KW20 / Rd).